A 169-amino-acid chain; its full sequence is Ribosome maturation factor RimP (169 aa).

The protein belongs to the RimP family.

It localises to the cytoplasm. Required for maturation of 30S ribosomal subunits. This chain is Ribosome maturation factor RimP, found in Pseudomonas putida (strain W619).